The following is a 360-amino-acid chain: Phosphoserine aminotransferase (360 aa).

An L-glutamate-binding site is contributed by R42. Residues A76–S77, W102, T152, D172, and Q195 contribute to the pyridoxal 5'-phosphate site. Residue K196 is modified to N6-(pyridoxal phosphate)lysine. Position 237–238 (N237–T238) interacts with pyridoxal 5'-phosphate.

The protein belongs to the class-V pyridoxal-phosphate-dependent aminotransferase family. SerC subfamily. In terms of assembly, homodimer. Requires pyridoxal 5'-phosphate as cofactor.

Its subcellular location is the cytoplasm. The catalysed reaction is O-phospho-L-serine + 2-oxoglutarate = 3-phosphooxypyruvate + L-glutamate. The enzyme catalyses 4-(phosphooxy)-L-threonine + 2-oxoglutarate = (R)-3-hydroxy-2-oxo-4-phosphooxybutanoate + L-glutamate. Its pathway is amino-acid biosynthesis; L-serine biosynthesis; L-serine from 3-phospho-D-glycerate: step 2/3. Catalyzes the reversible conversion of 3-phosphohydroxypyruvate to phosphoserine and of 3-hydroxy-2-oxo-4-phosphonooxybutanoate to phosphohydroxythreonine. The protein is Phosphoserine aminotransferase of Bacillus thuringiensis subsp. konkukian (strain 97-27).